Here is a 271-residue protein sequence, read N- to C-terminus: Aquaporin-2 (271 aa).

At 1–11 (MWELRSIAFSR) the chain is on the cytoplasmic side. A helical membrane pass occupies residues 12–32 (AVLAEFLATLLFVFFGLGSAL). Residues 33-40 (NWPQALPS) are Extracellular-facing. Residues 41-59 (VLQIAMAFGLAIGTLVQAL) form a helical membrane-spanning segment. The Cytoplasmic portion of the chain corresponds to 60 to 64 (GHVSG). The segment at residues 65-74 (AHINPAVTVA) is an intramembrane region (discontinuously helical). The short motif at 68-70 (NPA) is the NPA 1 element. The Cytoplasmic portion of the chain corresponds to 75–85 (CLVGCHVSFLR). A helical membrane pass occupies residues 86–107 (AVFYVAAQLLGAVAGAALLHEI). At 108–127 (TPPAIRGDLAVNALNNNSTA) the chain is on the extracellular side. N-linked (GlcNAc...) asparagine glycans are attached at residues Asn-123 and Asn-124. A helical transmembrane segment spans residues 128–148 (GQAVTVELFLTLQLVLCIFPS). At 149–156 (TDKRRGKQ) the chain is on the cytoplasmic side. The helical transmembrane segment at 157–176 (LGHPALSIGFSVALGHLLGI) threads the bilayer. Over 177–180 (HYTG) the chain is Extracellular. Residues 181–193 (CSMNPARSLAPAI) constitute an intramembrane region (discontinuously helical). Positions 184–186 (NPA) match the NPA 2 motif. At 194-201 (VTGKFDDH) the chain is on the extracellular side. Residues 202 to 222 (WVFWIGPLVGAIVASLLYNYV) form a helical membrane-spanning segment. The Cytoplasmic portion of the chain corresponds to 223–271 (LFPPAKSLSERLAVLKGLEPDTDWEEREVRRRQSVELHSPQSLPRGTKA). The disordered stretch occupies residues 249–271 (REVRRRQSVELHSPQSLPRGTKA). Ser-256 carries the post-translational modification Phosphoserine. The segment covering 261–271 (SPQSLPRGTKA) has biased composition (polar residues).

Belongs to the MIP/aquaporin (TC 1.A.8) family. In terms of assembly, homotetramer. Ser-256 phosphorylation is necessary and sufficient for expression at the apical membrane. Endocytosis is not phosphorylation-dependent. In terms of processing, N-glycosylated. As to expression, expressed in renal collecting tubules.

It is found in the apical cell membrane. The protein localises to the basolateral cell membrane. The protein resides in the cell membrane. Its subcellular location is the cytoplasmic vesicle membrane. It localises to the golgi apparatus. It is found in the trans-Golgi network membrane. The catalysed reaction is H2O(in) = H2O(out). It carries out the reaction glycerol(in) = glycerol(out). In terms of biological role, forms a water-specific channel that provides the plasma membranes of renal collecting duct with high permeability to water, thereby permitting water to move in the direction of an osmotic gradient. Could also be permeable to glycerol. The sequence is that of Aquaporin-2 from Ovis aries (Sheep).